A 371-amino-acid polypeptide reads, in one-letter code: Poly(rC)-binding protein 3 (371 aa).

KH domains follow at residues Thr-45–Gly-95, Pro-129–Gly-182, and Ala-293–Ile-357.

It is found in the cytoplasm. Single-stranded nucleic acid binding protein that binds preferentially to oligo dC. This is Poly(rC)-binding protein 3 from Homo sapiens (Human).